Consider the following 600-residue polypeptide: Potassium-transporting ATPase potassium-binding subunit (600 aa).

11 helical membrane passes run 6–26, 65–85, 136–156, 179–199, 283–303, 314–334, 367–387, 419–439, 458–478, 523–543, and 566–586; these read IILLAVFLLVLLVLAYPLGTY, GYAIALLVFNVLGTFFVYAVQ, ALSGQNFFSAATGIAVIYALI, LYVLLPLSVIVAVVLMSQGVI, FSNLVEMLAIFLIPAALCFTF, WAILGAMTLLFVVLTAVVMGA, FGISASTLFAAVTTAASCGAV, GLYGMLVFAILAVFIAGLMIG, SLVILVTPCLVLLGTAIAVVL, VMLAIAMWFGRFAVIVPVLAI, and LFIALLVGTVLLVGVLNYVPA.

The protein belongs to the KdpA family. As to quaternary structure, the system is composed of three essential subunits: KdpA, KdpB and KdpC.

The protein localises to the cell inner membrane. Functionally, part of the high-affinity ATP-driven potassium transport (or Kdp) system, which catalyzes the hydrolysis of ATP coupled with the electrogenic transport of potassium into the cytoplasm. This subunit binds the periplasmic potassium ions and delivers the ions to the membrane domain of KdpB through an intramembrane tunnel. The protein is Potassium-transporting ATPase potassium-binding subunit of Janthinobacterium sp. (strain Marseille) (Minibacterium massiliensis).